The following is a 138-amino-acid chain: Ribulose bisphosphate carboxylase small subunit (138 aa).

The protein belongs to the RuBisCO small chain family. As to quaternary structure, heterohexadecamer of 8 large and 8 small subunits.

The protein resides in the plastid. The protein localises to the chloroplast. RuBisCO catalyzes two reactions: the carboxylation of D-ribulose 1,5-bisphosphate, the primary event in carbon dioxide fixation, as well as the oxidative fragmentation of the pentose substrate in the photorespiration process. Both reactions occur simultaneously and in competition at the same active site. Although the small subunit is not catalytic it is essential for maximal activity. The protein is Ribulose bisphosphate carboxylase small subunit of Pyropia yezoensis (Susabi-nori).